The primary structure comprises 545 residues: tRNA-2-methylthio-N(6)-dimethylallyladenosine synthase (545 aa).

The segment at 1-32 (MSSASPLARCCDEATPSAGPRAAQPPYHGPVT) is disordered. Positions 58–174 (RTYQVRTYGC…LPTLLERARH (117 aa)) constitute an MTTase N-terminal domain. Positions 67, 103, 137, 211, 215, and 218 each coordinate [4Fe-4S] cluster. The 237-residue stretch at 197–433 (RESAYAAWVS…IALQEQISLE (237 aa)) folds into the Radical SAM core domain. A TRAM domain is found at 436-504 (RALVGQAVEV…PHHLIADAGV (69 aa)).

This sequence belongs to the methylthiotransferase family. MiaB subfamily. Monomer. It depends on [4Fe-4S] cluster as a cofactor.

The protein resides in the cytoplasm. The enzyme catalyses N(6)-dimethylallyladenosine(37) in tRNA + (sulfur carrier)-SH + AH2 + 2 S-adenosyl-L-methionine = 2-methylsulfanyl-N(6)-dimethylallyladenosine(37) in tRNA + (sulfur carrier)-H + 5'-deoxyadenosine + L-methionine + A + S-adenosyl-L-homocysteine + 2 H(+). In terms of biological role, catalyzes the methylthiolation of N6-(dimethylallyl)adenosine (i(6)A), leading to the formation of 2-methylthio-N6-(dimethylallyl)adenosine (ms(2)i(6)A) at position 37 in tRNAs that read codons beginning with uridine. The chain is tRNA-2-methylthio-N(6)-dimethylallyladenosine synthase from Mycobacterium bovis (strain BCG / Pasteur 1173P2).